The following is a 633-amino-acid chain: UvrABC system protein C (633 aa).

One can recognise a GIY-YIG domain in the interval 21 to 100 (TDPGVYKFLD…IKELQPRYNV (80 aa)). Residues 214-249 (QELMDLLKDEMQRQSDAHNFEEAARLRDQVKALKDY) form the UVR domain.

Belongs to the UvrC family. As to quaternary structure, interacts with UvrB in an incision complex.

It localises to the cytoplasm. In terms of biological role, the UvrABC repair system catalyzes the recognition and processing of DNA lesions. UvrC both incises the 5' and 3' sides of the lesion. The N-terminal half is responsible for the 3' incision and the C-terminal half is responsible for the 5' incision. In Salinibacter ruber (strain DSM 13855 / M31), this protein is UvrABC system protein C.